The sequence spans 508 residues: Heat shock 70 kDa protein 14 (508 aa).

This sequence belongs to the heat shock protein 70 family. Component of ribosome-associated complex (RAC).

The protein resides in the cytoplasm. It localises to the cytosol. In terms of biological role, component of the ribosome-associated complex (RAC), a complex involved in folding or maintaining nascent polypeptides in a folding-competent state. This chain is Heat shock 70 kDa protein 14 (hspa14), found in Xenopus tropicalis (Western clawed frog).